We begin with the raw amino-acid sequence, 213 residues long: Peptide methionine sulfoxide reductase MsrA (213 aa).

The active site involves cysteine 53.

It belongs to the MsrA Met sulfoxide reductase family.

It carries out the reaction L-methionyl-[protein] + [thioredoxin]-disulfide + H2O = L-methionyl-(S)-S-oxide-[protein] + [thioredoxin]-dithiol. The catalysed reaction is [thioredoxin]-disulfide + L-methionine + H2O = L-methionine (S)-S-oxide + [thioredoxin]-dithiol. Has an important function as a repair enzyme for proteins that have been inactivated by oxidation. Catalyzes the reversible oxidation-reduction of methionine sulfoxide in proteins to methionine. This is Peptide methionine sulfoxide reductase MsrA from Serratia proteamaculans (strain 568).